The sequence spans 287 residues: uncharacterized protein (287 aa).

Residues threonine 43 and tyrosine 104 each act as charge relay system in the active site. Catalysis depends on tyrosine 130, which acts as the Proton donor. Lysine 158 acts as the Schiff-base intermediate with substrate in catalysis.

Belongs to the DapA family. As to quaternary structure, homotetramer.

Its subcellular location is the cytoplasm. This is an uncharacterized protein from Pyrococcus horikoshii (strain ATCC 700860 / DSM 12428 / JCM 9974 / NBRC 100139 / OT-3).